The sequence spans 699 residues: Macoilin-2 (699 aa).

A run of 4 helical transmembrane segments spans residues 28 to 48, 75 to 95, 120 to 140, and 154 to 174; these read TFLYLKFLVVWALVLLADFVL, AFSVFFVCVAFTSDIICLLFI, VCLPTVSLWILFVYIEAAIRF, and FAAHCIGYPVVTLGFGFKSYV. 4 disordered regions span residues 219 to 289, 322 to 411, 432 to 451, and 679 to 699; these read AAAA…SILP, LLKD…PNNQ, LQASRQTEQDLRSQLGSLGT, and FMDTSPSGLDPNASVYQPLKK. Asn241, Asn267, Asn345, and Asn365 each carry an N-linked (GlcNAc...) asparagine glycan. Basic and acidic residues predominate over residues 257 to 271; the sequence is LEYREKERGKNESKK. The segment covering 329–346 has biased composition (low complexity); the sequence is SSSSSSTSSNSNKNYKNA. Residues 366–382 show a composition bias toward low complexity; it reads GSVPSSSGPSSSASSSS. Asn690 is a glycosylation site (N-linked (GlcNAc...) asparagine).

The protein belongs to the macoilin family.

It is found in the nucleus membrane. It localises to the cell projection. The protein resides in the axon. Its subcellular location is the rough endoplasmic reticulum membrane. Its function is as follows. May play a role in the regulation of neuronal activity. This chain is Macoilin-2, found in Danio rerio (Zebrafish).